The chain runs to 838 residues: V-type proton ATPase 116 kDa subunit a 1 (838 aa).

Over 1–388 (MGELFRSEEM…DAYGIGTYRE (388 aa)) the chain is Cytoplasmic. Phosphothreonine occurs at positions 250 and 360. Residue Tyr364 is modified to Phosphotyrosine. The chain crosses the membrane as a helical span at residues 389–407 (INPAPYTVITFPFLFAVMF). Residues 408–409 (GD) lie on the Vacuolar side of the membrane. Residues 410–426 (FGHGILMTLFAVWMVLR) traverse the membrane as a helical segment. At 427-441 (ESRILSQKNENEMFS) the chain is on the cytoplasmic side. Residues 442 to 471 (MVFSGRYIILLMGLFSIYTGLIYNDCFSKS) traverse the membrane as a helical segment. Topologically, residues 472–535 (LNIFGSSWSV…ATNKLTFLNS (64 aa)) are vacuolar. Residues 536–555 (FKMKMSVILGIIHMLFGVSL) form a helical membrane-spanning segment. Over 556–573 (SLFNHIYFKKPLNIYFGF) the chain is Cytoplasmic. A helical transmembrane segment spans residues 574-594 (IPEIIFMSSLFGYLVILIFYK). Topologically, residues 595–639 (WTAYDAHSSRNAPSLLIHFINMFLFSYPESGNAMLYSGQKGIQCF) are vacuolar. Residues 640–659 (LIVVAMLCVPWMLLFKPLIL) form a helical membrane-spanning segment. Over 660 to 725 (RHQYLRKKHL…DTMVHQAIHT (66 aa)) the chain is Cytoplasmic. A helical membrane pass occupies residues 726 to 750 (IEYCLGCISNTASYLRLWALSLAHA). Topologically, residues 751 to 771 (QLSEVLWTMVIHIGLHVRSLA) are vacuolar. Residues 772 to 810 (GGLGLFFIFAAFATLTVAILLIMEGLSAFLHALRLHWVE) form a helical membrane-spanning segment. The Cytoplasmic portion of the chain corresponds to 811–838 (FQNKFYTGTGFKFLPFSFEHIREGKFDE).

The protein belongs to the V-ATPase 116 kDa subunit family. In terms of assembly, V-ATPase is a heteromultimeric enzyme made up of two complexes: the ATP-hydrolytic V1 complex and the proton translocation V0 complex. The V1 complex consists of three catalytic AB heterodimers that form a heterohexamer, three peripheral stalks each consisting of EG heterodimers, one central rotor including subunits D and F, and the regulatory subunits C and H. The proton translocation complex V0 consists of the proton transport subunit a, a ring of proteolipid subunits c9c'', rotary subunit d, subunits e and f, and the accessory subunits ATP6AP1/Ac45 and ATP6AP2/PRR. Interacts with SPAAR. In terms of tissue distribution, expressed in brain (at protein level). Expressed in heart, kidney, liver, spleen, and to a lesser extent in brain.

Its subcellular location is the cytoplasmic vesicle. It localises to the clathrin-coated vesicle membrane. The protein localises to the secretory vesicle. It is found in the synaptic vesicle membrane. The protein resides in the melanosome. Its function is as follows. Subunit of the V0 complex of vacuolar(H+)-ATPase (V-ATPase), a multisubunit enzyme composed of a peripheral complex (V1) that hydrolyzes ATP and a membrane integral complex (V0) that translocates protons. V-ATPase is responsible for the acidification of various organelles, such as lysosomes, endosomes, the trans-Golgi network, and secretory granules, including synaptic vesicles. In certain cell types, can be exported to the plasma membrane, where it is involved in the acidification of the extracellular environment. Required for assembly and activity of the vacuolar ATPase. Through its action on compartment acidification, plays an essential role in neuronal development in terms of integrity and connectivity of neurons. The protein is V-type proton ATPase 116 kDa subunit a 1 (Atp6v0a1) of Rattus norvegicus (Rat).